The sequence spans 224 residues: Glutamate/aspartate import permease protein GltK (224 aa).

Topologically, residues 1-19 (MYEFDWSSIVPSLPYLLDG) are periplasmic. The helical transmembrane segment at 20–40 (LVITLKITVTAVVIGILWGTM) threads the bilayer. One can recognise an ABC transmembrane type-1 domain in the interval 20–216 (LVITLKITVT…VISLSASLLV (197 aa)). The Cytoplasmic segment spans residues 41–67 (LAVMRLSSFAPVAWFAKAYVNVFRSIP). The chain crosses the membrane as a helical span at residues 68 to 88 (LVMVLLWFYLIVPGFLQNVLG). Topologically, residues 89–94 (LSPKND) are periplasmic. The helical transmembrane segment at 95–112 (IRLISAMVAFSMFEAAYY) threads the bilayer. The Cytoplasmic portion of the chain corresponds to 113 to 154 (SEIIRAGIQSISRGQSSAALALGMTHWQSMKLIILPQAFRAM). Residues 155-175 (VPLLLTQGIVLFQDTSLVYVL) traverse the membrane as a helical segment. Residues 176–196 (SLADFFRTASTIGERDGTQVE) lie on the Periplasmic side of the membrane. Residues 197 to 217 (MILFAGFVYFVISLSASLLVS) form a helical membrane-spanning segment. Over 218 to 224 (YLKRRTA) the chain is Cytoplasmic.

It belongs to the binding-protein-dependent transport system permease family. HisMQ subfamily. As to quaternary structure, the complex is composed of two ATP-binding proteins (GltL), two transmembrane proteins (GltJ and GltK) and a solute-binding protein (GltI).

It localises to the cell inner membrane. Its function is as follows. Part of the ABC transporter complex GltIJKL involved in glutamate and aspartate uptake. Probably responsible for the translocation of the substrate across the membrane. In Escherichia coli O157:H7, this protein is Glutamate/aspartate import permease protein GltK (gltK).